The sequence spans 164 residues: Probable ribosome biogenesis protein RLP24 (164 aa).

The protein belongs to the eukaryotic ribosomal protein eL24 family. As to quaternary structure, associated with nucleolar and cytoplasmic pre-60S particles. At the end of biogenesis it dissociates from cytoplasmic pre-60S particles and is likely to be exchanged for its ribosomal homolog, RPL24.

The protein localises to the cytoplasm. The protein resides in the nucleus. Its function is as follows. Involved in the biogenesis of the 60S ribosomal subunit. Ensures the docking of nog1 to pre-60S particles. Activates and recruits ATPase AFG2 to cytoplasmic pre-60S ribosomal particles. The protein is Probable ribosome biogenesis protein RLP24 (rlp24) of Dictyostelium discoideum (Social amoeba).